The following is a 638-amino-acid chain: Chaperone protein DnaK (638 aa).

The residue at position 198 (threonine 198) is a Phosphothreonine; by autocatalysis. The disordered stretch occupies residues 598–638 (YEASQKEAAEADAKADAAKDSDVVDADFEEIDEDDDKKKSA). A compositionally biased stretch (basic and acidic residues) spans 601–619 (SQKEAAEADAKADAAKDSD). Positions 620–632 (VVDADFEEIDEDD) are enriched in acidic residues.

Belongs to the heat shock protein 70 family.

Functionally, acts as a chaperone. The sequence is that of Chaperone protein DnaK from Mesorhizobium japonicum (strain LMG 29417 / CECT 9101 / MAFF 303099) (Mesorhizobium loti (strain MAFF 303099)).